We begin with the raw amino-acid sequence, 347 residues long: Ribosomal RNA small subunit methyltransferase C (347 aa).

Belongs to the methyltransferase superfamily. RsmC family. In terms of assembly, monomer.

Its subcellular location is the cytoplasm. It carries out the reaction guanosine(1207) in 16S rRNA + S-adenosyl-L-methionine = N(2)-methylguanosine(1207) in 16S rRNA + S-adenosyl-L-homocysteine + H(+). Functionally, specifically methylates the guanine in position 1207 of 16S rRNA in the 30S particle. The protein is Ribosomal RNA small subunit methyltransferase C of Yersinia enterocolitica serotype O:8 / biotype 1B (strain NCTC 13174 / 8081).